We begin with the raw amino-acid sequence, 434 residues long: Monodehydroascorbate reductase, seedling isozyme (434 aa).

Residues 13 to 16 (GGVA), Glu-40, Arg-47, Lys-52, Ile-95, and 146 to 147 (RE) contribute to the FAD site. NAD(+)-binding positions include 171-177 (GGYIGLE), Glu-195, Arg-201, and Gly-260. NADP(+) is bound at residue 173-177 (YIGLE). 2 residues coordinate NADP(+): Arg-201 and Gly-260. Position 297 (Asp-297) interacts with FAD. An NAD(+)-binding site is contributed by 313–314 (EH). 313 to 314 (EH) contacts NADP(+). Residue Val-315 coordinates FAD. Arg-319 is a binding site for L-ascorbate. Tyr-348 is a binding site for FAD. An NAD(+)-binding site is contributed by Tyr-348. Tyr-348 serves as a coordination point for NADP(+). Residue Arg-350 participates in L-ascorbate binding.

Belongs to the FAD-dependent oxidoreductase family. FAD is required as a cofactor.

The protein localises to the cytoplasm. The catalysed reaction is 2 monodehydro-L-ascorbate radical + NADH + H(+) = 2 L-ascorbate + NAD(+). Catalyzes the conversion of monodehydroascorbate to ascorbate, oxidizing NADH in the process. In Cucumis sativus (Cucumber), this protein is Monodehydroascorbate reductase, seedling isozyme.